Consider the following 311-residue polypeptide: MTKIIFMGTPDFSATVLKGLIENPSYQLLAVVTQPDRAVGRKKEIKMSPVKEVALEHHIPVYQPEKLSGSQELESIMSLDADGIVTAAFGQFLPTKLLDSVTFAVNVHASLLPKYRGGAPIHYALINGEEEAGVTIMEMVKEMDAGDMIAKASTPILEDDNVGTMFDKLAILGRDLLIKTLPDYLSGQLKPVAQNHAEATFSPNITSEQEKLDFTKSARAIFNQVRGMNPWPIAHTYFNGERFKIYELLAIEGQGAPGQVIEKTKDSLIVATGSGAVSLRVVQPSGKPKMTIKDYLNGLGRDIKVGDYFGQ.

A (6S)-5,6,7,8-tetrahydrofolate-binding site is contributed by 110 to 113 (SLLP).

The protein belongs to the Fmt family.

The enzyme catalyses L-methionyl-tRNA(fMet) + (6R)-10-formyltetrahydrofolate = N-formyl-L-methionyl-tRNA(fMet) + (6S)-5,6,7,8-tetrahydrofolate + H(+). In terms of biological role, attaches a formyl group to the free amino group of methionyl-tRNA(fMet). The formyl group appears to play a dual role in the initiator identity of N-formylmethionyl-tRNA by promoting its recognition by IF2 and preventing the misappropriation of this tRNA by the elongation apparatus. In Streptococcus uberis (strain ATCC BAA-854 / 0140J), this protein is Methionyl-tRNA formyltransferase.